A 543-amino-acid chain; its full sequence is CTP synthase (543 aa).

The segment at Met1–Leu265 is amidoligase domain. Ser13 is a CTP binding site. UTP is bound at residue Ser13. Residues Ser14–Ile19 and Asp71 each bind ATP. Mg(2+) contacts are provided by Asp71 and Glu139. CTP-binding positions include Asp146–Glu148, Lys186–Gln191, and Lys222. Residues Lys186–Gln191 and Lys222 each bind UTP. One can recognise a Glutamine amidotransferase type-1 domain in the interval Thr290–Arg541. Residue Gly351 coordinates L-glutamine. The Nucleophile; for glutamine hydrolysis role is filled by Cys378. L-glutamine-binding positions include Leu379–Gln382, Glu402, and Arg469. Catalysis depends on residues His514 and Glu516.

It belongs to the CTP synthase family. As to quaternary structure, homotetramer.

The catalysed reaction is UTP + L-glutamine + ATP + H2O = CTP + L-glutamate + ADP + phosphate + 2 H(+). It carries out the reaction L-glutamine + H2O = L-glutamate + NH4(+). The enzyme catalyses UTP + NH4(+) + ATP = CTP + ADP + phosphate + 2 H(+). It participates in pyrimidine metabolism; CTP biosynthesis via de novo pathway; CTP from UDP: step 2/2. Allosterically activated by GTP, when glutamine is the substrate; GTP has no effect on the reaction when ammonia is the substrate. The allosteric effector GTP functions by stabilizing the protein conformation that binds the tetrahedral intermediate(s) formed during glutamine hydrolysis. Inhibited by the product CTP, via allosteric rather than competitive inhibition. Catalyzes the ATP-dependent amination of UTP to CTP with either L-glutamine or ammonia as the source of nitrogen. Regulates intracellular CTP levels through interactions with the four ribonucleotide triphosphates. The chain is CTP synthase from Azotobacter vinelandii (strain DJ / ATCC BAA-1303).